The primary structure comprises 86 residues: Small ribosomal subunit protein uS15c (86 aa).

The protein belongs to the universal ribosomal protein uS15 family. Part of the 30S ribosomal subunit.

It is found in the plastid. The protein is Small ribosomal subunit protein uS15c (rps15) of Cuscuta gronovii (Common dodder).